The sequence spans 613 residues: Azole resistance protein 1 (613 aa).

A disordered region spans residues 1-38 (MKGEPKTYSMSDLSYYGEKAQQQNEKQQKQYVVRRNST). The Extracellular segment spans residues 1–70 (MKGEPKTYSM…PKGFILYASL (70 aa)). Residues 71–91 (IALALSLFLAALDIMIVSTII) form a helical membrane-spanning segment. The Cytoplasmic segment spans residues 92–102 (EEVAKQFGSYS). Residues 103 to 123 (EIGWLFTGYSLPNALLALIWG) traverse the membrane as a helical segment. Residues 124–134 (RIATPIGFKET) are Extracellular-facing. Residues 135 to 155 (MLFAIVIFEIGSLISALANSM) form a helical membrane-spanning segment. Topologically, residues 156–163 (SMLIGGRV) are cytoplasmic. A helical membrane pass occupies residues 164-184 (IAGVGGCGIQSLSFVIGSTLV). The Extracellular segment spans residues 185 to 189 (EESQR). A helical membrane pass occupies residues 190-210 (GILIAVLSCSFAIASVVGPFL). Topologically, residues 211–221 (GGVFTSSVTWR) are cytoplasmic. The helical transmembrane segment at 222 to 242 (WCFYVNLPIGGLAFFLFLFFY) threads the bilayer. Topologically, residues 243-298 (NPGLSTFQETMDNIRKFPSQFIEIVRNVAYHLLKIKGFSKLNGWRKPFMELIFMYD) are extracellular. The chain crosses the membrane as a helical span at residues 299–319 (IIEFVFCSAGFTCILLAFTFG). Residues 320-329 (GNRYAWNSAS) lie on the Cytoplasmic side of the membrane. The helical transmembrane segment at 330 to 350 (IIILFIIGIVLVVLAGIYDFL) threads the bilayer. Over 351–375 (VFPKFNIVKATPHYQPLMSWTNIKK) the chain is Extracellular. Residues 376–396 (PGIFTVNIALFLTCAGYISQF) traverse the membrane as a helical segment. The Cytoplasmic segment spans residues 397 to 414 (TYIVQYFQLIYNDSAWRA). The helical transmembrane segment at 415-435 (AVHLVACIISTVVTAILCGAI) threads the bilayer. Over 436–443 (TDKTRQIK) the chain is Extracellular. The helical transmembrane segment at 444-464 (PIIVISSIFGVVGAGILTLLN) threads the bilayer. The Cytoplasmic segment spans residues 465–472 (NNANNSAH). Residues 473–493 (IGLLILPGVAFGGLAQSSMLA) traverse the membrane as a helical segment. The Extracellular portion of the chain corresponds to 494 to 581 (SQIQLDKKSP…SKLGNIISES (88 aa)). Residues 582–602 (LTDVFYMALGFYALSLIFAVF) traverse the membrane as a helical segment. Topologically, residues 603–613 (ASNKKVTASLR) are cytoplasmic.

This sequence belongs to the major facilitator superfamily.

The protein resides in the cell membrane. In terms of biological role, transporter protein required for adaptation to high stress imposed by low-chain organic acids, in particular by acetic acid, and for resistance to azoles, especially to ketoconazole and fluconazole. This chain is Azole resistance protein 1 (AZR1), found in Saccharomyces cerevisiae (strain ATCC 204508 / S288c) (Baker's yeast).